The sequence spans 219 residues: Transmembrane protein 125 (219 aa).

Transmembrane regions (helical) follow at residues 36-56, 68-88, 114-134, and 147-167; these read LCFA…VALL, LAVG…QLMS, ALVV…LAGL, and MLSV…GLLL.

The protein resides in the membrane. The chain is Transmembrane protein 125 (TMEM125) from Bos taurus (Bovine).